We begin with the raw amino-acid sequence, 2567 residues long: Unconventional myosin-XVIIIb (2567 aa).

The segment at 41-508 is disordered; it reads LVRGTEKEAK…SRDSDQAPED (468 aa). Over residues 44-54 the composition is skewed to basic and acidic residues; the sequence is GTEKEAKEARQ. Low complexity predominate over residues 71–104; the sequence is SISQPNSKSSSGTRSGSQQISQDDQSSSPGSSDI. Composition is skewed to basic and acidic residues over residues 105 to 116 and 160 to 176; these read LGKESEGSRSPD and LDPD…HDAP. Residues 196–206 show a composition bias toward polar residues; the sequence is SRTPCGSQAST. Composition is skewed to basic and acidic residues over residues 251–265, 278–287, and 326–349; these read TELK…DRQG, RPGKAEKEGA, and SKWD…EKTG. A compositionally biased stretch (polar residues) spans 350–362; the sequence is EPQTQMEKTSQVQ. Composition is skewed to basic and acidic residues over residues 367 to 377, 410 to 420, 471 to 485, and 492 to 508; these read DDLRMGEKAGE, SQTEKGCEAPK, LEKD…KENQ, and EEGK…APED. Positions 571 to 1333 constitute a Myosin motor domain; it reads DQVEDLASLI…VISRLEKQRE (763 aa). 660–667 lines the ATP pocket; it reads GWSGAGKT. Positions 1208–1232 are disordered; sequence VESRSGQESPPPPQPGRDKPGAGGP. Residues 1213–1240 are GPA; sequence GQESPPPPQPGRDKPGAGGPLALDIPAL. At Ser1216 the chain carries Phosphoserine. The region spanning 1336 to 1365 is the IQ domain; sequence VSQSIVLFQAACKGFLSRQEFKKLKIRRLA. Coiled coils occupy residues 1396–1783, 1825–1961, and 2014–2090; these read SATI…GLIG, KTSV…STVD, and ESQQ…VASS. The segment at 1426–2083 is tail; sequence NELRQNTDLL…IRRIADLQAA (658 aa). Phosphoserine is present on Ser1829. The segment covering 2139 to 2153 has biased composition (polar residues); the sequence is TMRTPSRQSATSSRI. Disordered regions lie at residues 2139–2194 and 2217–2249; these read TMRT…PVSP and STER…PSAA. Residues 2158–2167 are compositionally biased toward basic and acidic residues; sequence INEEAGDTER. Residues 2168-2185 show a composition bias toward polar residues; the sequence is TQSALALSRARSTNVHSK. Ser2193 carries the post-translational modification Phosphoserine. A compositionally biased stretch (polar residues) spans 2227–2238; sequence PLASRSTNTSPL. Phosphoserine is present on residues Ser2296 and Ser2309. The disordered stretch occupies residues 2357 to 2376; the sequence is SRPSMGRKLSSPTTPRDMLL. Ser2377 carries the post-translational modification Phosphoserine. Disordered regions lie at residues 2444–2471 and 2494–2567; these read FLPA…SQRS and KSPE…YLQK. Over residues 2494–2504 the composition is skewed to basic and acidic residues; it reads KSPEPKEDPAH. Over residues 2506–2520 the composition is skewed to low complexity; the sequence is SDSSSSSGSIVSFKS. Over residues 2537 to 2556 the composition is skewed to basic and acidic residues; the sequence is GGERTSPERREPGTGRKDDD.

Belongs to the TRAFAC class myosin-kinesin ATPase superfamily. Myosin family. In terms of assembly, homodimer. May interact with F actin through the GPA motif (Gly/Pro/Ala-rich). Selectively expressed in cardiac and skeletal muscles. Weakly expressed in testis, pancreas, placenta, prostate, lung and thymus.

It localises to the cytoplasm. Its subcellular location is the nucleus. The protein resides in the myofibril. It is found in the sarcomere. Functionally, may be involved in intracellular trafficking of the muscle cell when in the cytoplasm, whereas entering the nucleus, may be involved in the regulation of muscle specific genes. May play a role in the control of tumor development and progression; restored MYO18B expression in lung cancer cells suppresses anchorage-independent growth. The chain is Unconventional myosin-XVIIIb (MYO18B) from Homo sapiens (Human).